Consider the following 615-residue polypeptide: MPIQVLPPQLANQIAAGEVVERPASVVKELVENSLDAGATRIDIDIERGGAKLIRIRDNGCGIKKDELALALARHATSKIASLDDLEAIISLGFRGEALASISSVSRLTLTSRTAEQQEAWQAYAEGRDMNVTVKPAAHPVGTTLEVLDLFYNTPARRKFLRTEKTEFNHIDEIIRRIALARFDVTINLSHNGKIVRQYRAVPEGGQKERRLGAICGTAFLEQALAIEWQHGDLTLRGWVADPNHTTPALAEIQYCYVNGRMMRDRLINHAIRQACEDKLGADQQPAFVLYLEIDPHQVDVNVHPAKHEVRFHQSRLVHDFIYQGVLSVLQQQLETPLPLDDEPQPAPRSIPENRVAAGRNHFAEPAAREPVAPRYTPAPASGSRPAAPWPNAQPGYQKQQGEVYRQLLQTPAPMQKLKAPEPQEPALAANSQSFGRVLTIVHSDCALLERDGNISLLSLPVAERWLRQAQLTPGEAPVCAQPLLIPLRLKVSAEEKSALEKAQSALAELGIDFQSDAQHVTIRAVPLPLRQQNLQILIPELIGYLAKQSVFEPGNIAQWIARNLMSEHAQWSMAQAITLLADVERLCPQLVKTPPGGLLQSVDLHPAIKALKDE.

Positions 363–397 (FAEPAAREPVAPRYTPAPASGSRPAAPWPNAQPGY) are disordered. Residues 364 to 391 (AEPAAREPVAPRYTPAPASGSRPAAPWP) show a composition bias toward low complexity.

This sequence belongs to the DNA mismatch repair MutL/HexB family.

Functionally, this protein is involved in the repair of mismatches in DNA. It is required for dam-dependent methyl-directed DNA mismatch repair. May act as a 'molecular matchmaker', a protein that promotes the formation of a stable complex between two or more DNA-binding proteins in an ATP-dependent manner without itself being part of a final effector complex. The sequence is that of DNA mismatch repair protein MutL from Escherichia coli (strain K12 / MC4100 / BW2952).